Reading from the N-terminus, the 141-residue chain is Putative pre-16S rRNA nuclease (141 aa).

It belongs to the YqgF nuclease family.

It is found in the cytoplasm. In terms of biological role, could be a nuclease involved in processing of the 5'-end of pre-16S rRNA. The polypeptide is Putative pre-16S rRNA nuclease (Dictyoglomus turgidum (strain DSM 6724 / Z-1310)).